A 1135-amino-acid polypeptide reads, in one-letter code: Phytochrome C (1135 aa).

Over residues 1-11 the composition is skewed to polar residues; the sequence is MSSPLNNRGTC. Positions 1–26 are disordered; sequence MSSPLNNRGTCSRSSSARSRHSARVV. One can recognise a GAF domain in the interval 216 to 399; sequence NLSLLCDVLV…VFGIQLNKEV (184 aa). Cys321 provides a ligand contact to phytochromobilin. PAS domains follow at residues 618–688 and 748–822; these read VTNE…LQGI and IQGD…TKLS. The Histidine kinase domain occupies 902–1122; that stretch reads YIHQELRNPL…IILIEFPVAQ (221 aa).

This sequence belongs to the phytochrome family. As to quaternary structure, homodimer. Contains one covalently linked phytochromobilin chromophore.

Regulatory photoreceptor which exists in two forms that are reversibly interconvertible by light: the Pr form that absorbs maximally in the red region of the spectrum and the Pfr form that absorbs maximally in the far-red region. Photoconversion of Pr to Pfr induces an array of morphogenic responses, whereas reconversion of Pfr to Pr cancels the induction of those responses. Pfr controls the expression of a number of nuclear genes including those encoding the small subunit of ribulose-bisphosphate carboxylase, chlorophyll A/B binding protein, protochlorophyllide reductase, rRNA, etc. It also controls the expression of its own gene(s) in a negative feedback fashion. This Sorghum bicolor (Sorghum) protein is Phytochrome C (PHYC).